Here is a 114-residue protein sequence, read N- to C-terminus: Ribosome-binding factor A (114 aa).

Belongs to the RbfA family. In terms of assembly, monomer. Binds 30S ribosomal subunits, but not 50S ribosomal subunits or 70S ribosomes.

Its subcellular location is the cytoplasm. In terms of biological role, one of several proteins that assist in the late maturation steps of the functional core of the 30S ribosomal subunit. Associates with free 30S ribosomal subunits (but not with 30S subunits that are part of 70S ribosomes or polysomes). Required for efficient processing of 16S rRNA. May interact with the 5'-terminal helix region of 16S rRNA. This Listeria monocytogenes serotype 4b (strain F2365) protein is Ribosome-binding factor A.